The chain runs to 231 residues: 2-C-methyl-D-erythritol 4-phosphate cytidylyltransferase (231 aa).

This sequence belongs to the IspD/TarI cytidylyltransferase family. IspD subfamily.

It catalyses the reaction 2-C-methyl-D-erythritol 4-phosphate + CTP + H(+) = 4-CDP-2-C-methyl-D-erythritol + diphosphate. Its pathway is isoprenoid biosynthesis; isopentenyl diphosphate biosynthesis via DXP pathway; isopentenyl diphosphate from 1-deoxy-D-xylulose 5-phosphate: step 2/6. Its function is as follows. Catalyzes the formation of 4-diphosphocytidyl-2-C-methyl-D-erythritol from CTP and 2-C-methyl-D-erythritol 4-phosphate (MEP). In Lysinibacillus sphaericus (strain C3-41), this protein is 2-C-methyl-D-erythritol 4-phosphate cytidylyltransferase.